The chain runs to 644 residues: MFQDNPLLAQLKQQLHSQTPRAEGVVKATEKGFGFLEVDAQKSYFIPPPQMKKVMHGDRIVAVIHTEKERESAEPEELIEPFLTRFVGKVQGKNDRLSIVPDHPLLKDAIPCRAARGVQHEFKEGDWAVAEMRRHPLKGDRSFYADLTQYITFADDHFVPWWVTLARHNLEKEAPNGVATEMLDEGLERQDLTALNFVTIDSASTEDMDDALYAEELADGRLQLTVAIADPTAWIAEGSKLDNAAKIRAFTNYLPGFNIPMLPRELSDDLCSLRANEVRPALACRMIIAADGTIDDDIAFFAATIESKAKLVYDNVSDWLENNSTWQPENEGIAQQIRLLHRICLSRSEWRHHHALVFKDRPDYRFVLGEKGEVLDIVAEPRRIANRIVEESMIAANLCAARVLRDKLGFGIYNVHTGFDPANADALAALLKTHGLHVDAEEVLTLEGFCKLRRELDAQPSGFLDSRIRRFQSFAEISTEPGPHFGLGLEAYATWTSPIRKYGDMINHRLLKAVIKGEAIARPQEDITQQMAERRRLNRMAERDVGDWLYARFLNDKAGTNTRFAAEIIDVSRGGMRVRLVDNGAIAFIPAPFLHAVRDELVCSQENGTVQIKGETVYKVTDVIDVTIAEVRMETRSIIARPAA.

The RNB domain maps to 189-516 (RQDLTALNFV…NHRLLKAVIK (328 aa)). The S1 motif domain occupies 561–643 (NTRFAAEIID…ETRSIIARPA (83 aa)).

This sequence belongs to the RNR ribonuclease family. RNase II subfamily.

It localises to the cytoplasm. The enzyme catalyses Exonucleolytic cleavage in the 3'- to 5'-direction to yield nucleoside 5'-phosphates.. Its function is as follows. Involved in mRNA degradation. Hydrolyzes single-stranded polyribonucleotides processively in the 3' to 5' direction. The chain is Exoribonuclease 2 from Salmonella typhi.